Consider the following 279-residue polypeptide: Thymidylate synthase (279 aa).

A dUMP-binding site is contributed by Arg133–Arg134. The active-site Nucleophile is the Cys154. DUMP contacts are provided by residues Arg178–Asp181, Asn189, and His219–Tyr221. Asp181 provides a ligand contact to (6R)-5,10-methylene-5,6,7,8-tetrahydrofolate. Ala278 is a (6R)-5,10-methylene-5,6,7,8-tetrahydrofolate binding site.

The protein belongs to the thymidylate synthase family. Bacterial-type ThyA subfamily. In terms of assembly, homodimer.

The protein resides in the cytoplasm. The catalysed reaction is dUMP + (6R)-5,10-methylene-5,6,7,8-tetrahydrofolate = 7,8-dihydrofolate + dTMP. It participates in pyrimidine metabolism; dTTP biosynthesis. Functionally, catalyzes the reductive methylation of 2'-deoxyuridine-5'-monophosphate (dUMP) to 2'-deoxythymidine-5'-monophosphate (dTMP) while utilizing 5,10-methylenetetrahydrofolate (mTHF) as the methyl donor and reductant in the reaction, yielding dihydrofolate (DHF) as a by-product. This enzymatic reaction provides an intracellular de novo source of dTMP, an essential precursor for DNA biosynthesis. The protein is Thymidylate synthase of Streptococcus pyogenes serotype M6 (strain ATCC BAA-946 / MGAS10394).